The sequence spans 226 residues: MKITFYGQNTLALKIGDIHVLVDPFITGNDLSKDKVDINDLKADYILLTHAHQDHILDAEAIAKNTGAVIVSNFEIANHYEEKGFEVHPMNHGGSWDFEFGKVKYVNAIHTSSFPDGSYGGQPGGFVIEGEHKNIYIAGDTALTMDMKLIPMHTKLDIAVLPIGDNFTMGINDAIIASDFIECDKIIGCHYDTFGYIEIDHEEAKKKFYEKGKDLMLLDIGESIEL.

The protein belongs to the UPF0173 family.

The protein is UPF0173 metal-dependent hydrolase GFO_2312 of Christiangramia forsetii (strain DSM 17595 / CGMCC 1.15422 / KT0803) (Gramella forsetii).